A 793-amino-acid chain; its full sequence is Serine/threonine-protein phosphatase 1 regulatory subunit GAC1 (793 aa).

The span at 1 to 10 shows a compositional bias: polar residues; the sequence is MVIQTATTLS. A disordered region spans residues 1–20; sequence MVIQTATTLSPAKARPSFPH. In terms of domain architecture, CBM21 spans 235–360; sequence TKYLNGQNVK…NNNGKNYHLF (126 aa). Phosphoserine is present on residues Ser-415 and Ser-424. 2 disordered regions span residues 450–491 and 616–671; these read LENA…SIDL and TTMD…LNDH. The span at 623–633 shows a compositional bias: polar residues; the sequence is KTSTINNSTDT. The span at 637-648 shows a compositional bias: basic and acidic residues; sequence PSKENGTVKENK. A compositionally biased stretch (low complexity) spans 649–665; sequence SSANSTSAPSSSQNRAS.

Functionally, regulates the activity of glycogen synthase. It is most probably a regulatory subunit for protein phosphatase type 1. The polypeptide is Serine/threonine-protein phosphatase 1 regulatory subunit GAC1 (GAC1) (Saccharomyces cerevisiae (strain ATCC 204508 / S288c) (Baker's yeast)).